A 253-amino-acid chain; its full sequence is ATP synthase subunit b 1 (253 aa).

Residues 2–22 traverse the membrane as a helical segment; it reads LIDWFTVIAELVNFLILVWLL.

Belongs to the ATPase B chain family. F-type ATPases have 2 components, F(1) - the catalytic core - and F(0) - the membrane proton channel. F(1) has five subunits: alpha(3), beta(3), gamma(1), delta(1), epsilon(1). F(0) has four main subunits: a(1), b(2) and c(10-14). The alpha and beta chains form an alternating ring which encloses part of the gamma chain. F(1) is attached to F(0) by a central stalk formed by the gamma and epsilon chains, while a peripheral stalk is formed by the delta and b chains.

It localises to the cell inner membrane. Functionally, f(1)F(0) ATP synthase produces ATP from ADP in the presence of a proton or sodium gradient. F-type ATPases consist of two structural domains, F(1) containing the extramembraneous catalytic core and F(0) containing the membrane proton channel, linked together by a central stalk and a peripheral stalk. During catalysis, ATP synthesis in the catalytic domain of F(1) is coupled via a rotary mechanism of the central stalk subunits to proton translocation. Its function is as follows. Component of the F(0) channel, it forms part of the peripheral stalk, linking F(1) to F(0). This is ATP synthase subunit b 1 from Prosthecochloris aestuarii (strain DSM 271 / SK 413).